The primary structure comprises 100 residues: Urease subunit gamma (100 aa).

This sequence belongs to the urease gamma subunit family. In terms of assembly, heterotrimer of UreA (gamma), UreB (beta) and UreC (alpha) subunits. Three heterotrimers associate to form the active enzyme.

The protein localises to the cytoplasm. It catalyses the reaction urea + 2 H2O + H(+) = hydrogencarbonate + 2 NH4(+). The protein operates within nitrogen metabolism; urea degradation; CO(2) and NH(3) from urea (urease route): step 1/1. The polypeptide is Urease subunit gamma (Synechococcus sp. (strain RCC307)).